The chain runs to 547 residues: Putative laccase-5 (547 aa).

The N-terminal stretch at 1–35 is a signal peptide; it reads MGTPRGLRNAGSSSSACRFLAAFAVLLALPTLTAG. 2 consecutive Plastocyanin-like domains span residues 43 to 159 and 170 to 323; these read NVQM…PKRG and ELPP…YAPT. Residues asparagine 48 and asparagine 89 are each glycosylated (N-linked (GlcNAc...) asparagine). Residues histidine 93, histidine 95, histidine 138, and histidine 140 each coordinate Cu cation. Asparagine 199, asparagine 215, asparagine 251, asparagine 311, asparagine 342, asparagine 349, asparagine 388, asparagine 395, asparagine 405, and asparagine 430 each carry an N-linked (GlcNAc...) asparagine glycan. The Plastocyanin-like 3 domain maps to 408–531; that stretch reads FVRPRVALLE…SMAWLVNDGP (124 aa). 7 residues coordinate Cu cation: histidine 448, histidine 451, histidine 453, histidine 510, cysteine 511, histidine 512, and histidine 516.

The protein belongs to the multicopper oxidase family. The cofactor is Cu cation.

It is found in the secreted. It localises to the extracellular space. The protein resides in the apoplast. The catalysed reaction is 4 hydroquinone + O2 = 4 benzosemiquinone + 2 H2O. Functionally, lignin degradation and detoxification of lignin-derived products. In Oryza sativa subsp. japonica (Rice), this protein is Putative laccase-5 (LAC5).